The sequence spans 331 residues: MDCRLLNEKSRIFVNADPYFVSDYVNQHVGSHCIRLPKSGCPEASLNHSTFGSLDLCRISYGGSVRVTSPGLETCYHLQVLLKGHCLWRGYGLEHYFSPGELLLINPDDRADLTYSEDCEKFIVKLPSVVLDRACSESYWHKPSEGIRFTTRHNLQQLDGFINLLGLVCDEAEHTNSMPRVQEYYTGIIATKLLEMLSSNVSRETFSEGCPSFERVVQFIEDNLKQSISLERLAELALMSPRSLYTLFEKHAGTTPKNYIRNRKLECIRARLSDPNANVRSVTEMALDYGFFHTGRFAENYRSTFGELPSDTLRRRKMKWLDPEESLPPLP.

Positions 214-315 constitute an HTH araC/xylS-type domain; sequence ERVVQFIEDN…GELPSDTLRR (102 aa). 2 DNA-binding regions (H-T-H motif) span residues 231–252 and 282–305; these read ERLA…EKHA and VTEM…RSTF.

It localises to the cytoplasm. Functionally, regulatory protein of the TOL plasmid xyl operons. XylS activates the xylXYZLTEGFJQKIH operon required for the degradation of toluene, m-xylene and p-xylene. The chain is XylDLEGF operon transcriptional activator 3 (xylS3) from Pseudomonas putida (Arthrobacter siderocapsulatus).